The chain runs to 621 residues: MALLQISEPGMSPAPHQRRLAVGIDLGTTNSLVAAVRNSIPEVLPDEHGRALLPSVVRYLPNGNAHIGYKAQDEAVRDPKNTIISVKRFMGRGVRDVANIEHSLYDFVDAPGMVQLKTAAGIKSPVEVSAEILATLRQRAEDSLGDELVGAVITVPAYFDDAQRQATKDAAQLAGLEVLRLLNEPTAAAIAYGLDNAAEGIYAVYDLGGGTFDISVLKLTKGVFEVMSTGGDSALGGDDFDQRLLCWIVEQVGLQPLSAEDSRLLMVRARAAKEALSSSDSTVIDAVLTSGEIVHLTLDADTFIQITANLVQKTLTPVRKALRDAGVGPEDVKGVVLVGGATRMPAIRKAVGDYFGQQPLTNLDPDRVVALGAAMQANLLAGNHAPGEDWLLLDVIPLSLGVETMGGLVEKIVPRNSTIPVARAQEFTTFKDGQTAMAIHVLQGERELASDCRSLARFELRGIPPMVAGAARIRVTYQVDADGLLSVSARETGSGVEASVSVKPSYGLADDDIARMLQESFQEAEHDMKNRALAEERVEAARLVEATTRALETDGNLLSADERAAVDELMANVSEIAKGEDHRAIKAAVERLSQGTDEFAARRMDRSIKSALAGKKVQEIG.

Belongs to the heat shock protein 70 family.

Functionally, chaperone involved in the maturation of iron-sulfur cluster-containing proteins. Has a low intrinsic ATPase activity which is markedly stimulated by HscB. The sequence is that of Chaperone protein HscA homolog from Cupriavidus metallidurans (strain ATCC 43123 / DSM 2839 / NBRC 102507 / CH34) (Ralstonia metallidurans).